The primary structure comprises 526 residues: Collagen alpha-2(I) chain (526 aa).

Residues 1-291 (GFPGEKGPSG…PRSPPSLRPK (291 aa)) form a disordered region. 3 stretches are compositionally biased toward low complexity: residues 9–36 (SGEA…LGLP), 44–81 (LPGV…NGAP), and 110–131 (YPGN…SVGP). Residues 165 to 176 (RGDKGEPGDKGP) are compositionally biased toward basic and acidic residues. The span at 249-261 (AGPPGPPGPPGPP) shows a compositional bias: pro residues. Positions 263–526 (ASGGGYDFGY…YVDVGPVCFK (264 aa)) are cleaved as a propeptide — C-terminal propeptide. The Fibrillar collagen NC1 domain maps to 293–526 (YEVDATLKSL…YVDVGPVCFK (234 aa)). Disulfide bonds link C323–C355, C363–C524, and C432–C477. Residues D341, N343, Q344, C346, and D349 each coordinate Ca(2+).

It belongs to the fibrillar collagen family. In terms of assembly, trimers of one alpha 2(I) and two alpha 1(I) chains. Interacts (via C-terminus) with TMEM131 (via PapD-L domain); the interaction is direct and is involved in assembly and TRAPPIII ER-to-Golgi transport complex-dependent secretion of collagen. In terms of processing, prolines at the third position of the tripeptide repeating unit (G-X-Y) are hydroxylated in some or all of the chains. In terms of tissue distribution, forms the fibrils of tendon, ligaments and bones. In bones the fibrils are mineralized with calcium hydroxyapatite.

The protein localises to the secreted. The protein resides in the extracellular space. Its subcellular location is the extracellular matrix. Functionally, type I collagen is a member of group I collagen (fibrillar forming collagen). The chain is Collagen alpha-2(I) chain (COL1A2) from Oryctolagus cuniculus (Rabbit).